The chain runs to 328 residues: MYNSACPEGRSVISRRRTGLGDCLWSLAAAWSYARHTRRSLVVDWSESCYSADPNINLFPVLFDNINDIGGVSVHYVSRTSSLALESSVIPAWWRLPVKQRGTRSDAQIFRERDELRNLFFSRRDADAAAVICDCCLMWCCDEDLEREFYDHLIVNQYVRQEVDRVYAERFLGNVVIGVHIRHGNGEDILDHDRYWCEENAAMNLVAHKIREERRKFPFRSTKIFLCTDSPAVSEWFRREMPGLFATEKEFRQRGEGELHSAHFGLGGAVAALVDMQLLSRCDVLIRYPPTSAFSRWPSLLVERVFDFDLARGVFCQADRKAGGASSG.

Residues 6-317 (CPEGRSVISR…FDLARGVFCQ (312 aa)) form the GT23 domain.

Belongs to the glycosyltransferase 23 family.

Its function is as follows. Fucosyltransferase which adds the fucose moiety of the nod factor on its terminal reducing N-acetylglucosamine end. Uses GDP-fucose as the donor group. The polypeptide is Nodulation protein Z (nodZ) (Azorhizobium caulinodans (strain ATCC 43989 / DSM 5975 / JCM 20966 / LMG 6465 / NBRC 14845 / NCIMB 13405 / ORS 571)).